A 593-amino-acid polypeptide reads, in one-letter code: Prospero homeobox protein 2 (593 aa).

Disordered regions lie at residues 24 to 48 (CMDQ…QLPS), 79 to 130 (SPSS…GGTR), 153 to 199 (TEPR…KDLC), 260 to 284 (QERS…SAYK), 298 to 333 (PQAG…QSPL), and 356 to 388 (GRGP…PWGL). Residues 87-99 (RARESLRCPEKGR) are compositionally biased toward basic and acidic residues. Low complexity predominate over residues 167-181 (PRSSPRARPRNSCSS). Residues 363–380 (WSGSPPQDAAFQSHTSPE) are compositionally biased toward polar residues. The region spanning 433-491 (QEGLSPGHLKKAKLMFFFTRYPSSSLLKAYFPDVQFNRCITSQMIKWFSNFREFYYIQM) is the Prospero-type homeo domain. A homeo-Prospero region spans residues 433–591 (QEGLSPGHLK…KSPSFLPGLF (159 aa)). A Prospero domain is found at 492–591 (EKYARQALSD…KSPSFLPGLF (100 aa)).

The protein belongs to the Prospero homeodomain family. Expressed in testis.

The protein resides in the nucleus. In terms of biological role, transcription regulator. Does not seem to be essential for embryonic development and postnatal survival. In Mus musculus (Mouse), this protein is Prospero homeobox protein 2 (Prox2).